A 178-amino-acid chain; its full sequence is Crossover junction endodeoxyribonuclease RuvC (178 aa).

Active-site residues include D11, E71, and D143. Mg(2+) is bound by residues D11, E71, and D143.

The protein belongs to the RuvC family. Homodimer which binds Holliday junction (HJ) DNA. The HJ becomes 2-fold symmetrical on binding to RuvC with unstacked arms; it has a different conformation from HJ DNA in complex with RuvA. In the full resolvosome a probable DNA-RuvA(4)-RuvB(12)-RuvC(2) complex forms which resolves the HJ. It depends on Mg(2+) as a cofactor.

It localises to the cytoplasm. The enzyme catalyses Endonucleolytic cleavage at a junction such as a reciprocal single-stranded crossover between two homologous DNA duplexes (Holliday junction).. Functionally, the RuvA-RuvB-RuvC complex processes Holliday junction (HJ) DNA during genetic recombination and DNA repair. Endonuclease that resolves HJ intermediates. Cleaves cruciform DNA by making single-stranded nicks across the HJ at symmetrical positions within the homologous arms, yielding a 5'-phosphate and a 3'-hydroxyl group; requires a central core of homology in the junction. The consensus cleavage sequence is 5'-(A/T)TT(C/G)-3'. Cleavage occurs on the 3'-side of the TT dinucleotide at the point of strand exchange. HJ branch migration catalyzed by RuvA-RuvB allows RuvC to scan DNA until it finds its consensus sequence, where it cleaves and resolves the cruciform DNA. In Neisseria meningitidis serogroup C / serotype 2a (strain ATCC 700532 / DSM 15464 / FAM18), this protein is Crossover junction endodeoxyribonuclease RuvC.